Here is a 110-residue protein sequence, read N- to C-terminus: Large ribosomal subunit protein uL24 (110 aa).

Belongs to the universal ribosomal protein uL24 family. In terms of assembly, part of the 50S ribosomal subunit.

One of two assembly initiator proteins, it binds directly to the 5'-end of the 23S rRNA, where it nucleates assembly of the 50S subunit. Functionally, one of the proteins that surrounds the polypeptide exit tunnel on the outside of the subunit. This is Large ribosomal subunit protein uL24 from Caldicellulosiruptor saccharolyticus (strain ATCC 43494 / DSM 8903 / Tp8T 6331).